The chain runs to 559 residues: Potassium-transporting ATPase potassium-binding subunit (559 aa).

12 helical membrane-spanning segments follow: residues 5–25 (GFLLTASFLLILFVLARPLGV), 63–83 (LLAILTLNLLGLTVLFLMLLG), 132–152 (GLTVQNFLSAATGIAVIFALI), 170–190 (LVRITLWILLPLALLIALLFI), 250–270 (LTNMVQMLAIFLIPAALCFAF), 283–303 (LLWAMSIIFVVCVAVVMSAEV), 329–349 (VLVSSLFAVVTTAASCGAVIA), 356–376 (ALGGMVPMWLMQIGEVVFGGV), 379–399 (GLYGMLLFVLLAVFIAGLMIG), 416–436 (MTALAILITPTLVLLGTALAM), 484–504 (LLAFCMFVGRFGVIIPVMAIA), and 524–544 (GALFVGLLIGTVLLVGALTFI).

Belongs to the KdpA family. In terms of assembly, the system is composed of three essential subunits: KdpA, KdpB and KdpC.

Its subcellular location is the cell inner membrane. In terms of biological role, part of the high-affinity ATP-driven potassium transport (or Kdp) system, which catalyzes the hydrolysis of ATP coupled with the electrogenic transport of potassium into the cytoplasm. This subunit binds the periplasmic potassium ions and delivers the ions to the membrane domain of KdpB through an intramembrane tunnel. This chain is Potassium-transporting ATPase potassium-binding subunit, found in Citrobacter koseri (strain ATCC BAA-895 / CDC 4225-83 / SGSC4696).